A 318-amino-acid chain; its full sequence is Very-long-chain 3-oxoacyl-CoA reductase-B (318 aa).

A helical transmembrane segment spans residues 15-35; the sequence is FWYLGVVAATWWGLRAAWCLL. 54–83 contacts NADP(+); sequence GKWAVVTGATDGIGKAYAEELARRGMNIVL. 2 helical membrane passes run 187 to 207 and 281 to 301; these read GVVL…LTVY and AITG…SMGM. Residue Ser-194 coordinates substrate. The Proton acceptor role is filled by Tyr-207.

Belongs to the short-chain dehydrogenases/reductases (SDR) family. 17-beta-HSD 3 subfamily.

Its subcellular location is the endoplasmic reticulum membrane. It catalyses the reaction a very-long-chain (3R)-3-hydroxyacyl-CoA + NADP(+) = a very-long-chain 3-oxoacyl-CoA + NADPH + H(+). The catalysed reaction is 17beta-estradiol + NAD(+) = estrone + NADH + H(+). It carries out the reaction 17beta-estradiol + NADP(+) = estrone + NADPH + H(+). It participates in lipid metabolism; fatty acid biosynthesis. Its pathway is steroid biosynthesis; estrogen biosynthesis. Catalyzes the second of the four reactions of the long-chain fatty acids elongation cycle. This endoplasmic reticulum-bound enzymatic process, allows the addition of two carbons to the chain of long- and very long-chain fatty acids/VLCFAs per cycle. This enzyme has a 3-ketoacyl-CoA reductase activity, reducing 3-ketoacyl-CoA to 3-hydroxyacyl-CoA, within each cycle of fatty acid elongation. Thereby, it may participate in the production of VLCFAs of different chain lengths that are involved in multiple biological processes as precursors of membrane lipids and lipid mediators. May also catalyze the transformation of estrone (E1) into estradiol (E2) and play a role in estrogen formation. This Xenopus laevis (African clawed frog) protein is Very-long-chain 3-oxoacyl-CoA reductase-B (hsd17b12-b).